We begin with the raw amino-acid sequence, 418 residues long: Light-independent protochlorophyllide reductase subunit N (418 aa).

The [4Fe-4S] cluster site is built by Cys17, Cys42, and Cys103.

The protein belongs to the BchN/ChlN family. Protochlorophyllide reductase is composed of three subunits; ChlL, ChlN and ChlB. Forms a heterotetramer of two ChlB and two ChlN subunits. Requires [4Fe-4S] cluster as cofactor.

The catalysed reaction is chlorophyllide a + oxidized 2[4Fe-4S]-[ferredoxin] + 2 ADP + 2 phosphate = protochlorophyllide a + reduced 2[4Fe-4S]-[ferredoxin] + 2 ATP + 2 H2O. The protein operates within porphyrin-containing compound metabolism; chlorophyll biosynthesis (light-independent). Its function is as follows. Component of the dark-operative protochlorophyllide reductase (DPOR) that uses Mg-ATP and reduced ferredoxin to reduce ring D of protochlorophyllide (Pchlide) to form chlorophyllide a (Chlide). This reaction is light-independent. The NB-protein (ChlN-ChlB) is the catalytic component of the complex. This chain is Light-independent protochlorophyllide reductase subunit N, found in Prochlorococcus marinus (strain MIT 9515).